Reading from the N-terminus, the 188-residue chain is Photosystem I assembly protein Ycf4 (188 aa).

2 helical membrane-spanning segments follow: residues 26–48 and 68–90; these read MLWA…SSYF and AALT…VFFL.

The protein belongs to the Ycf4 family.

The protein resides in the cellular thylakoid membrane. Functionally, seems to be required for the assembly of the photosystem I complex. This Picosynechococcus sp. (strain ATCC 27264 / PCC 7002 / PR-6) (Agmenellum quadruplicatum) protein is Photosystem I assembly protein Ycf4.